A 617-amino-acid polypeptide reads, in one-letter code: MAAVAAGGLVGKGRDISLAALQRHDPYINRIVDVASQVALYTFGHRANEWEKTDVEGTLFVYTRSASPKHGFTIMNRLSMENRTEPITKDLDFQLQDPFLLYRNARLSIYGIWFYDKEECQRIAELMKNLTQYEQLKAHQGTGAGISPVILNSGEGKEVDILRMLIKAKDEYTKCKTCSEPKKITSSSAIYDNPNLIKPIPVKPSENQQQRIPQPNQTLDPEPQHLSLTALFGKQDKATCQETVEPPQTLHQQQQQQQQQQEKLPIRQGVVRSLSYEEPRRHSPPIEKQLCPAIQKLMVRSADLHPLSELPENRPCENGSTHSAGEFFTGPVQPGSPHNIGTSRGVQNASRTQNLFEKLQSTPGAANKCDPSTPAPASSAALNRSRAPTSVTPVAPGKGLAQPPQAYFNGSLPPQTVGHQAHGREQSTLPRQTLPISGSQTGSSGVISPQELLKKLQIVQQEQQLHASNRPALAAKFPVLAQSSGTGKPLESWINKTPNTEQQTPLFQVISPQRIPATAAPSLLMSPMVFAQPTSVPPKERESGLLPVGGQEPPAAATSLLLPIQSPEPSVITSSPLTKLQLQEALLYLIQNDDNFLNIIYEAYLFSMTQAAMKKTM.

N-acetylalanine is present on Ala-2. Ser-147 carries the post-translational modification Phosphoserine. Tyr-191 is modified (phosphotyrosine). 2 disordered regions span residues 195–222 (NLIK…LDPE) and 243–266 (TVEP…KLPI). Residues 205–219 (SENQQQRIPQPNQTL) show a composition bias toward polar residues. Over residues 252–261 (QQQQQQQQQQ) the composition is skewed to low complexity. Phosphoserine is present on residues Ser-275 and Ser-336. The segment at 362 to 426 (TPGAANKCDP…VGHQAHGREQ (65 aa)) is disordered. Residues 371–381 (PSTPAPASSAA) are compositionally biased toward low complexity. Position 392 is a phosphothreonine (Thr-392). Phosphoserine is present on residues Ser-448 and Ser-511.

This sequence belongs to the DCP1 family. Interacts with DCP1A. As to quaternary structure, (Microbial infection) Interacts with rotavirus A non-structural protein 2; this interaction probably plays a role in the sequestration of DCP1B in viral factories. Interacts with rotavirus A non-structural protein 5; this interaction probably plays a role in its sequestration in viral factories.

The protein localises to the cytoplasm. It is found in the nucleus. It catalyses the reaction a 5'-end (N(7)-methyl 5'-triphosphoguanosine)-ribonucleoside in mRNA + H2O = N(7)-methyl-GDP + a 5'-end phospho-ribonucleoside in mRNA + 2 H(+). Its function is as follows. May play a role in the degradation of mRNAs, both in normal mRNA turnover and in nonsense-mediated mRNA decay. May remove the 7-methyl guanine cap structure from mRNA molecules, yielding a 5'-phosphorylated mRNA fragment and 7m-GDP. This chain is mRNA-decapping enzyme 1B (DCP1B), found in Homo sapiens (Human).